A 512-amino-acid chain; its full sequence is 2,3-bisphosphoglycerate-independent phosphoglycerate mutase (512 aa).

The Mn(2+) site is built by Asp12 and Ser62. Catalysis depends on Ser62, which acts as the Phosphoserine intermediate. Residues His123, 154–155 (RD), Arg181, Arg187, 253–256 (RPDR), and Lys336 contribute to the substrate site. The Mn(2+) site is built by Asp403, His407, Asp444, His445, and His462.

Belongs to the BPG-independent phosphoglycerate mutase family. As to quaternary structure, monomer. The cofactor is Mn(2+).

It catalyses the reaction (2R)-2-phosphoglycerate = (2R)-3-phosphoglycerate. It functions in the pathway carbohydrate degradation; glycolysis; pyruvate from D-glyceraldehyde 3-phosphate: step 3/5. Its function is as follows. Catalyzes the interconversion of 2-phosphoglycerate and 3-phosphoglycerate. This Onion yellows phytoplasma (strain OY-M) protein is 2,3-bisphosphoglycerate-independent phosphoglycerate mutase.